Here is a 419-residue protein sequence, read N- to C-terminus: CCA-adding enzyme (419 aa).

Positions 8 and 11 each coordinate ATP. CTP is bound by residues G8 and R11. Mg(2+) is bound by residues D21 and D23. R91, R137, and R140 together coordinate ATP. Residues R91, R137, and R140 each contribute to the CTP site.

It belongs to the tRNA nucleotidyltransferase/poly(A) polymerase family. Bacterial CCA-adding enzyme type 2 subfamily. It depends on Mg(2+) as a cofactor.

The enzyme catalyses a tRNA precursor + 2 CTP + ATP = a tRNA with a 3' CCA end + 3 diphosphate. The catalysed reaction is a tRNA with a 3' CCA end + 2 CTP + ATP = a tRNA with a 3' CCACCA end + 3 diphosphate. Its function is as follows. Catalyzes the addition and repair of the essential 3'-terminal CCA sequence in tRNAs without using a nucleic acid template. Adds these three nucleotides in the order of C, C, and A to the tRNA nucleotide-73, using CTP and ATP as substrates and producing inorganic pyrophosphate. tRNA 3'-terminal CCA addition is required both for tRNA processing and repair. Also involved in tRNA surveillance by mediating tandem CCA addition to generate a CCACCA at the 3' terminus of unstable tRNAs. While stable tRNAs receive only 3'-terminal CCA, unstable tRNAs are marked with CCACCA and rapidly degraded. This chain is CCA-adding enzyme, found in Buchnera aphidicola subsp. Baizongia pistaciae (strain Bp).